The chain runs to 57 residues: Large ribosomal subunit protein bL32B (57 aa).

It belongs to the bacterial ribosomal protein bL32 family.

This Listeria welshimeri serovar 6b (strain ATCC 35897 / DSM 20650 / CCUG 15529 / CIP 8149 / NCTC 11857 / SLCC 5334 / V8) protein is Large ribosomal subunit protein bL32B.